The chain runs to 339 residues: NADP-dependent dehydrogenase M3 (339 aa).

NADP(+) is bound by residues S49, I51, D93, Y206, K210, I240, and Q244. The active-site Proton acceptor is Y206. The active-site Lowers pKa of active site Tyr is K210.

This sequence belongs to the short-chain dehydrogenases/reductases (SDR) family. In terms of assembly, homodimer.

The protein resides in the cytoplasm. The protein localises to the cytosol. The protein operates within secondary metabolite biosynthesis. Functionally, NADP-dependent dehydrogenase; part of the gene cluster that mediates the biosynthesis of squalestatin S1 (SQS1, also known as zaragozic acid A), a heavily oxidized fungal polyketide that offers potent cholesterol lowering activity by targeting squalene synthase (SS). SQS1 is composed of a 2,8-dioxobicyclic[3.2.1]octane-3,4,5-tricarboxyclic acid core that is connected to two lipophilic polyketide arms. These initial steps feature the priming of an unusual benzoic acid starter unit onto the highly reducing polyketide synthase pks2, followed by oxaloacetate extension and product release to generate a tricarboxylic acid containing product. The phenylalanine ammonia lyase (PAL) M7 and the acyl-CoA ligase M9 are involved in transforming phenylalanine into benzoyl-CoA. The citrate synthase-like protein R3 is involved in connecting the C-alpha-carbons of the hexaketide chain and oxaloacetate to afford the tricarboxylic acid unit. The potential hydrolytic enzymes, M8 and M10, are in close proximity to pks2 and may participate in product release. On the other side, the tetraketide arm is synthesized by a the squalestatin tetraketide synthase pks1 and enzymatically esterified to the core in the last biosynthetic step, by the acetyltransferase M4. The biosynthesis of the tetraketide must involve 3 rounds of chain extension. After the first and second rounds methyl-transfer occurs, and in all rounds of extension the ketoreductase and dehydratase are active. The enoyl reductase and C-MeT of pks1 are not active in the final round of extension. The acetyltransferase M4 appears to have a broad substrate selectivity for its acyl CoA substrate, allowing the in vitro synthesis of novel squalestatins. The biosynthesis of SQS1 requires several oxidative steps likely performed by oxidoreductases M1, R1 and R2. Finally, in support of the identification of the cluster as being responsible for SQS1 production, the cluster contains a gene encoding a putative squalene synthase (SS) R6, suggesting a likely mechanism for self-resistance. The chain is NADP-dependent dehydrogenase M3 from Phoma sp. (strain ATCC 20986 / MF5453).